Reading from the N-terminus, the 1522-residue chain is Myosin-15 (1522 aa).

The Myosin N-terminal SH3-like domain maps to 12–61 (RKGDKVWVEDKDLAWIAADVLDSFDNKLHVETSTGKKVFVSPEKLFRRDP). The 671-residue stretch at 67–737 (NGVDDMTKLT…QIGILDSRRA (671 aa)) folds into the Myosin motor domain. ATP contacts are provided by residues 161-168 (GESGAGKT) and 214-222 (NDNSSRFGK). Actin-binding stretches follow at residues 499–533 (LIEK…FQNF), 535–558 (FHPR…AGKV), 593–618 (FPSA…KQQL), and 618–640 (LQAL…KPNS). 5 consecutive IQ domains span residues 763–792 (ARAS…AAAA), 788–817 (NAAA…AAIV), 811–840 (LVSA…HRAA), 836–865 (EHRA…SIIA), and 859–888 (RQSS…VANE). Residues 889–1059 (AGALRLAKTK…NQVLMQKTLI (171 aa)) adopt a coiled-coil conformation. Residues 1164-1456 (NIIIEGINEA…VSQMRVLVDK (293 aa)) form the Dilute domain.

Belongs to the TRAFAC class myosin-kinesin ATPase superfamily. Myosin family. Plant myosin class XI subfamily. As to quaternary structure, homodimer. Interacts with MYOB1 and MYOB7. Interacts with WIT1 and WIT2. Core component of the LINC complex which is composed of inner nuclear membrane SUN domain-containing proteins coupled to outer nuclear membrane WIP and WIT proteins. The LINC complex also involves nucleoskeletal proteins CRWN/LINC and possibly KAKU4 and the cytoskeletal myosin KAKU1.

It is found in the cytoplasm. The protein resides in the nucleus membrane. In terms of biological role, myosin heavy chain that is required for the cell cycle-regulated transport of various organelles and proteins for their segregation. Functions by binding with its tail domain to receptor proteins on organelles and exerting force with its N-terminal motor domain against actin filaments, thereby transporting its cargo along polarized actin cables. Involved in trafficking of Golgi stacks and mitochondria. Plays a role in nuclear shape determination. Drives nuclear movement along actin filaments. As component of the SUN-WIP-WIT2-KAKU1 complex, mediates the transfer of cytoplasmic forces to the nuclear envelope (NE), leading to nuclear shape changes. In Arabidopsis thaliana (Mouse-ear cress), this protein is Myosin-15 (XI-I).